The primary structure comprises 412 residues: Alpha-1-antitrypsin 1-3 (412 aa).

The signal sequence occupies residues 1-24 (MTPSISWGLLLLAGLCCLVPSFLA). N-linked (GlcNAc...) asparagine glycosylation is found at asparagine 64, asparagine 101, and asparagine 265. An RCL region spans residues 368–387 (AVTVLLAVPYSMPPILRFDH).

It belongs to the serpin family.

Its subcellular location is the secreted. Inhibitor of serine proteases. Can inhibit trypsin and chymotrypsin; relatively ineffective against elastase. In Mus musculus (Mouse), this protein is Alpha-1-antitrypsin 1-3 (Serpina1c).